Consider the following 274-residue polypeptide: Cytochrome b-c1 complex subunit Rieske, mitochondrial (274 aa).

At 79 to 103 the chain is on the mitochondrial matrix side; sequence SHTDVKVPDFSEYRRPEVLDSTKSS. A helical transmembrane segment spans residues 104 to 140; the sequence is RESSEARKGFSYLVTAVTTVGVAYAAKNAVTQFVSSM. The Mitochondrial intermembrane portion of the chain corresponds to 141 to 274; it reads SASADVLALA…FTSDDMVIVG (134 aa). The 86-residue stretch at 187–272 folds into the Rieske domain; it reads EAAVELSQLR…YEFTSDDMVI (86 aa). Residues Cys-217, His-219, Cys-236, His-239, and Ser-241 each contribute to the [2Fe-2S] cluster site. Cys-222 and Cys-238 are joined by a disulfide.

The protein belongs to the Rieske iron-sulfur protein family. As to quaternary structure, component of the ubiquinol-cytochrome c oxidoreductase (cytochrome b-c1 complex, complex III, CIII), a multisubunit enzyme composed of 11 subunits. The complex is composed of 3 respiratory subunits cytochrome b, cytochrome c1 and Rieske protein UQCRFS1, 2 core protein subunits UQCRC1/QCR1 and UQCRC2/QCR2, and 6 low-molecular weight protein subunits UQCRH/QCR6, UQCRB/QCR7, UQCRQ/QCR8, UQCR10/QCR9, UQCR11/QCR10 and subunit 9, the cleavage product of Rieske protein UQCRFS1. The complex exists as an obligatory dimer and forms supercomplexes (SCs) in the inner mitochondrial membrane with NADH-ubiquinone oxidoreductase (complex I, CI) and cytochrome c oxidase (complex IV, CIV), resulting in different assemblies (supercomplex SCI(1)III(2)IV(1) and megacomplex MCI(2)III(2)IV(2)). Incorporation of the Rieske protein UQCRFS1 is the penultimate step in complex III assembly. Interacts with TTC19, which is involved in the clearance of UQCRFS1 fragments. In terms of assembly, component of the ubiquinol-cytochrome c oxidoreductase (cytochrome b-c1 complex, complex III, CIII). Subunit 9 corresponds to the mitochondrial targeting sequence (MTS) of Rieske protein UQCRFS1. It is retained after processing and incorporated inside complex III, where it remains bound to the complex and localizes between the 2 core subunits UQCRC1/QCR1 and UQCRC2/QCR2. [2Fe-2S] cluster is required as a cofactor. Post-translationally, proteolytic processing is necessary for the correct insertion of UQCRFS1 in the complex III dimer. Several fragments are generated during UQCRFS1 insertion, most probably due to the endogenous matrix-processing peptidase (MPP) activity of the 2 core protein subunits UQCRC1/QCR1 and UQCRC2/QCR2, which are homologous to the 2 mitochondrial-processing peptidase (MPP) subunits beta-MPP and alpha-MPP respectively. The action of the protease is also necessary for the clearance of the UQCRFS1 fragments.

It localises to the mitochondrion inner membrane. It carries out the reaction a quinol + 2 Fe(III)-[cytochrome c](out) = a quinone + 2 Fe(II)-[cytochrome c](out) + 2 H(+)(out). Functionally, component of the ubiquinol-cytochrome c oxidoreductase, a multisubunit transmembrane complex that is part of the mitochondrial electron transport chain which drives oxidative phosphorylation. The respiratory chain contains 3 multisubunit complexes succinate dehydrogenase (complex II, CII), ubiquinol-cytochrome c oxidoreductase (cytochrome b-c1 complex, complex III, CIII) and cytochrome c oxidase (complex IV, CIV), that cooperate to transfer electrons derived from NADH and succinate to molecular oxygen, creating an electrochemical gradient over the inner membrane that drives transmembrane transport and the ATP synthase. The cytochrome b-c1 complex catalyzes electron transfer from ubiquinol to cytochrome c, linking this redox reaction to translocation of protons across the mitochondrial inner membrane, with protons being carried across the membrane as hydrogens on the quinol. In the process called Q cycle, 2 protons are consumed from the matrix, 4 protons are released into the intermembrane space and 2 electrons are passed to cytochrome c. The Rieske protein is a catalytic core subunit containing a [2Fe-2S] iron-sulfur cluster. It cycles between 2 conformational states during catalysis to transfer electrons from the quinol bound in the Q(0) site in cytochrome b to cytochrome c1. Incorporation of UQCRFS1 is the penultimate step in complex III assembly. Component of the ubiquinol-cytochrome c oxidoreductase (cytochrome b-c1 complex, complex III, CIII). UQCRFS1 undergoes proteolytic processing once it is incorporated in the complex III dimer. One of the fragments, called subunit 9, corresponds to its mitochondrial targeting sequence (MTS). The proteolytic processing is necessary for the correct insertion of UQCRFS1 in the complex III dimer, but the persistence of UQCRFS1-derived fragments may prevent newly imported UQCRFS1 to be processed and assembled into complex III and is detrimental for the complex III structure and function. In Symphalangus syndactylus (Siamang), this protein is Cytochrome b-c1 complex subunit Rieske, mitochondrial (UQCRFS1).